The chain runs to 248 residues: Chitin deacetylase (248 aa).

An N-terminal signal peptide occupies residues 1 to 26; that stretch reads MHFSTLFGAAATAALAGSTNASPLAR. 2 disulfide bridges follow: cysteine 38–cysteine 237 and cysteine 148–cysteine 152. One can recognise a NodB homology domain in the interval 42-232; the sequence is GLVALTYDDG…TLKSKGYRAV (191 aa). Aspartate 49 (proton acceptor) is an active-site residue. Residue aspartate 49 coordinates acetate. Co(2+)-binding residues include aspartate 50, histidine 104, and histidine 108. Tyrosine 145 lines the acetate pocket. The active-site Proton donor is histidine 206.

The protein belongs to the polysaccharide deacetylase family. In terms of assembly, monomer. Co(2+) serves as cofactor. In terms of processing, N-glycosylated.

The protein localises to the secreted. It carries out the reaction [(1-&gt;4)-N-acetyl-beta-D-glucosaminyl](n) + n H2O = chitosan + n acetate. In terms of biological role, hydrolyzes the N-acetamido groups of N-acetyl-D-glucosamine polymers in chitin to form chitosan and acetate. May play a role in evasion of the host immune response; plant chitinases liberate chitin molecules from the fungal cell wall which act as elicitors of the plant immune response, deacetylation of the liberated chitin neutralizes elicitor activity. This is Chitin deacetylase from Colletotrichum lindemuthianum (Bean anthracnose fungus).